The sequence spans 192 residues: Probable nicotinate-nucleotide adenylyltransferase (192 aa).

The protein belongs to the NadD family.

The enzyme catalyses nicotinate beta-D-ribonucleotide + ATP + H(+) = deamido-NAD(+) + diphosphate. Its pathway is cofactor biosynthesis; NAD(+) biosynthesis; deamido-NAD(+) from nicotinate D-ribonucleotide: step 1/1. Functionally, catalyzes the reversible adenylation of nicotinate mononucleotide (NaMN) to nicotinic acid adenine dinucleotide (NaAD). In Rhizobium etli (strain CIAT 652), this protein is Probable nicotinate-nucleotide adenylyltransferase.